The chain runs to 271 residues: tRNA pseudouridine synthase A (271 aa).

D52 (nucleophile) is an active-site residue. Y110 contributes to the substrate binding site.

It belongs to the tRNA pseudouridine synthase TruA family. As to quaternary structure, homodimer.

It carries out the reaction uridine(38/39/40) in tRNA = pseudouridine(38/39/40) in tRNA. Functionally, formation of pseudouridine at positions 38, 39 and 40 in the anticodon stem and loop of transfer RNAs. The sequence is that of tRNA pseudouridine synthase A from Maridesulfovibrio salexigens (strain ATCC 14822 / DSM 2638 / NCIMB 8403 / VKM B-1763) (Desulfovibrio salexigens).